A 234-amino-acid polypeptide reads, in one-letter code: Putative ankyrin repeat protein RF_0063 (234 aa).

ANK repeat units follow at residues 149-180 (NNNT…TISI) and 184-213 (YNNT…QKAL).

The chain is Putative ankyrin repeat protein RF_0063 from Rickettsia felis (strain ATCC VR-1525 / URRWXCal2) (Rickettsia azadi).